We begin with the raw amino-acid sequence, 323 residues long: tRNA U34 carboxymethyltransferase (323 aa).

Carboxy-S-adenosyl-L-methionine contacts are provided by residues Lys-91, Trp-105, Lys-110, Gly-130, 152–154, 181–182, Met-196, Tyr-200, and Arg-315; these read DPT and IE.

This sequence belongs to the class I-like SAM-binding methyltransferase superfamily. CmoB family. As to quaternary structure, homotetramer.

The catalysed reaction is carboxy-S-adenosyl-L-methionine + 5-hydroxyuridine(34) in tRNA = 5-carboxymethoxyuridine(34) in tRNA + S-adenosyl-L-homocysteine + H(+). Catalyzes carboxymethyl transfer from carboxy-S-adenosyl-L-methionine (Cx-SAM) to 5-hydroxyuridine (ho5U) to form 5-carboxymethoxyuridine (cmo5U) at position 34 in tRNAs. This is tRNA U34 carboxymethyltransferase from Shigella dysenteriae serotype 1 (strain Sd197).